Consider the following 172-residue polypeptide: Adenine phosphoribosyltransferase (172 aa).

The protein belongs to the purine/pyrimidine phosphoribosyltransferase family. In terms of assembly, homodimer.

It is found in the cytoplasm. The catalysed reaction is AMP + diphosphate = 5-phospho-alpha-D-ribose 1-diphosphate + adenine. Its pathway is purine metabolism; AMP biosynthesis via salvage pathway; AMP from adenine: step 1/1. In terms of biological role, catalyzes a salvage reaction resulting in the formation of AMP, that is energically less costly than de novo synthesis. The sequence is that of Adenine phosphoribosyltransferase from Streptococcus uberis (strain ATCC BAA-854 / 0140J).